The following is a 338-amino-acid chain: Citramalyl-CoA lyase, mitochondrial (338 aa).

A mitochondrion-targeting transit peptide spans 1–20 (MALCVLQNAVRGAAALPRLK). Positions 48, 55, and 59 each coordinate substrate. Lys55, Lys59, and Lys64 each carry N6-acetyllysine. N6-acetyllysine; alternate occurs at positions 80 and 90. Lys80 and Lys90 each carry N6-succinyllysine; alternate. Residue Arg105 participates in substrate binding. Mg(2+)-binding residues include Glu169 and Asp204. 270–271 (IH) contacts substrate. The residue at position 307 (Lys307) is an N6-succinyllysine. Residue Asp318 is part of the active site.

This sequence belongs to the HpcH/HpaI aldolase family. Citrate lyase beta subunit-like subfamily. As to quaternary structure, homotrimer. Mg(2+) is required as a cofactor.

Its subcellular location is the mitochondrion. It catalyses the reaction glyoxylate + acetyl-CoA + H2O = (S)-malate + CoA + H(+). The enzyme catalyses propanoyl-CoA + glyoxylate + H2O = 3-methylmalate + CoA + H(+). It carries out the reaction (3S)-citramalyl-CoA = pyruvate + acetyl-CoA. The catalysed reaction is (S)-malyl-CoA + H2O = (S)-malate + CoA + H(+). Mitochondrial citramalyl-CoA lyase indirectly involved in the vitamin B12 metabolism. Converts citramalyl-CoA into acetyl-CoA and pyruvate in the C5-dicarboxylate catabolism pathway. The C5-dicarboxylate catabolism pathway is required to detoxify itaconate, a vitamin B12-poisoning metabolite. Also acts as a malate synthase in vitro, converting glyoxylate and acetyl-CoA to malate. Also displays malyl-CoA thioesterase activity. Also acts as a beta-methylmalate synthase in vitro, by mediating conversion of glyoxylate and propionyl-CoA to beta-methylmalate. Also has very weak citramalate synthase activity in vitro. The sequence is that of Citramalyl-CoA lyase, mitochondrial (Clybl) from Rattus norvegicus (Rat).